A 180-amino-acid chain; its full sequence is Flavin prenyltransferase UbiX (180 aa).

Residues 9-11 (GAS), S33, 84-87 (SITT), and R119 each bind FMN. Y149 and R165 together coordinate dimethylallyl phosphate.

It belongs to the UbiX/PAD1 family.

The catalysed reaction is dimethylallyl phosphate + FMNH2 = prenylated FMNH2 + phosphate. Functionally, flavin prenyltransferase that catalyzes the synthesis of the prenylated FMN cofactor (prenyl-FMN) for 4-hydroxy-3-polyprenylbenzoic acid decarboxylase UbiD. The prenyltransferase is metal-independent and links a dimethylallyl moiety from dimethylallyl monophosphate (DMAP) to the flavin N5 and C6 atoms of FMN. This chain is Flavin prenyltransferase UbiX, found in Thermoplasma acidophilum (strain ATCC 25905 / DSM 1728 / JCM 9062 / NBRC 15155 / AMRC-C165).